Here is a 113-residue protein sequence, read N- to C-terminus: Mediator of RNA polymerase II transcription subunit 11 (113 aa).

The protein belongs to the Mediator complex subunit 11 family. In terms of assembly, component of the Mediator complex.

The protein localises to the nucleus. Functionally, component of the Mediator complex, a coactivator involved in the regulated transcription of nearly all RNA polymerase II-dependent genes. Mediator functions as a bridge to convey information from gene-specific regulatory proteins to the basal RNA polymerase II transcription machinery. Mediator is recruited to promoters by direct interactions with regulatory proteins and serves as a scaffold for the assembly of a functional pre-initiation complex with RNA polymerase II and the general transcription factors. This Eremothecium gossypii (strain ATCC 10895 / CBS 109.51 / FGSC 9923 / NRRL Y-1056) (Yeast) protein is Mediator of RNA polymerase II transcription subunit 11 (MED11).